We begin with the raw amino-acid sequence, 962 residues long: MSESVTTGSDDDGGDRESSPVMLSQSFDPMSSSSNSSSEENSDDDYEKTISSKKRHPRPNSKGVNVKRSRRNAIVEEDPQEEIFNNLFAFLLDQKVDTMDIAVSWFADYAKDNQSALANLINFILKCCGCNRAINVFDVQDQDSASATLSQIQLSVERTSTRDYPLNSKNLKFRNFRKRLTGLLSNFVSQLSIRNYLYNSTVFEDIMSWVVAMSSSTMRPIRHTATVFCLNIMTFLCEKSKELLNEHAIATKQLEKEEKRSRVNRNRINELNNSLGEIVKQQDTLTTYLNDYFDSVFVHRYRDVEPKIRVDCLQELGVWINTVPSIFFSGSYLRYLGWMLSDINTTVRLTVVKVLRKFFETDSFIGGLRHFSSRFKERILEMSCVDADIGVRVASIRLCNAMRTCGFLENSEILKVLKLILDINPRVQREAVLFLCKVVDESVNEKIDLWGEEDYILKAFSQTSLTTFSVHWIKFSQMCKLLEEVRLSYQSSFDYDTLLRIFQKNGNFITPITQALLNACEIDSIYQSWEDISNFVLFDNYTSTLKDPIDSILSFCKLNDFQESILLQLLSASIQTVCNNNFITPKTVHNKQAAETTNDQNKDKDLLYLNLLPYINSITERNSASPTLLHDSLRLLFSMDLTEMTDPQLSRHFELLINNLKKFFLTNNDLQIIQGCTILFLRLDSIPALKEDLKLLVTDICDQTVTEFLKNFGSFNIQDAVITKDEFVIFEACLTRIEGCTSLKDFSDYPEFDIIYERLVSLLSRVPNSYEDTLKFSAINTLQSLLFWFFLRKDNPADEEKKKDDETKVFNCLINIMNNDSSKILQLQAARTFLETVIMKEGVKASHYNDDNRVSEEHNFLKPQFLDALLKILEGWLYTYAKVGQFPFKRLTQASSPHTQISLDKNPLNRRLLEHVCCDLTSKLLIVVSLSNTITPEFSQQFCELRGHYGPKLSAIVDEFLN.

Positions 1–72 (MSESVTTGSD…GVNVKRSRRN (72 aa)) are disordered. The segment covering 21–30 (VMLSQSFDPM) has biased composition (polar residues). Basic residues predominate over residues 51 to 71 (SSKKRHPRPNSKGVNVKRSRR). Positions 236-275 (LCEKSKELLNEHAIATKQLEKEEKRSRVNRNRINELNNSL) form a coiled coil. Positions 297 to 382 (FVHRYRDVEP…SRFKERILEM (86 aa)) constitute an SCD domain.

It belongs to the SCC3 family. Cohesin complexes are composed of the psm1/smc1 and psm3/smc3 heterodimer attached via their hinge domain, rad21/scc1 which link them, and psc3/scc3, which interacts with rad21. Interacts with swi6. The interaction with swi6 may contribute to recruit cohesin complex to heterochromatin.

Its subcellular location is the nucleus. The protein resides in the chromosome. It localises to the centromere. Component of cohesin complex, a complex required for the cohesion of sister chromatids after DNA replication. The cohesin complex apparently forms a large proteinaceous ring within which sister chromatids can be trapped. At anaphase, the rad21 subunit of the cohesin complex is cleaved and dissociates from chromatin, allowing sister chromatids to segregate. The cohesin complex may also play a role in spindle pole assembly during mitosis. The chain is Cohesin subunit psc3 (psc3) from Schizosaccharomyces pombe (strain 972 / ATCC 24843) (Fission yeast).